A 406-amino-acid chain; its full sequence is MSGGMQNGTQETERRVIDINDRHTVNVGPQHPATHGVLRLIMELEGETVTRADPHIGLLHRGTEKLIEYKSYLQAVPYFDRLDYVSPMCCEHAFALATERLLGVKVPERAQWIRVLFAEITRILNHLLNAVHLALDIGAQSPSLWGYEEREKLLTFHEAVSGARFHANYFRPGGVSKDMPTGLAEQIWEWSEKFPKFLDDLQSLLNENRIFRQRLVDIGVISAEDALAMGFSGPNLRASGIAWDLRRAQPYDKYDEVDFDIPVGRHGDSFDRYLVRIREMAESLKIIRQALKAMPEGPIKVQDHKITPPKRAEMKRSMEALIHHFKLYTEGYHVPAGTTYTAVEAPKGEFGVYLVADGSNRPYRCKIRATGFSHLQAMNLMSKGHLLADAIAVLGSIDIVFGEVDR.

Belongs to the complex I 49 kDa subunit family. In terms of assembly, NDH-1 is composed of 14 different subunits. Subunits NuoB, C, D, E, F, and G constitute the peripheral sector of the complex.

It localises to the cell inner membrane. The enzyme catalyses a quinone + NADH + 5 H(+)(in) = a quinol + NAD(+) + 4 H(+)(out). In terms of biological role, NDH-1 shuttles electrons from NADH, via FMN and iron-sulfur (Fe-S) centers, to quinones in the respiratory chain. The immediate electron acceptor for the enzyme in this species is believed to be ubiquinone. Couples the redox reaction to proton translocation (for every two electrons transferred, four hydrogen ions are translocated across the cytoplasmic membrane), and thus conserves the redox energy in a proton gradient. This chain is NADH-quinone oxidoreductase subunit D, found in Acidiphilium cryptum (strain JF-5).